The sequence spans 697 residues: MFS antiporter QDR3 (697 aa).

The Cytoplasmic segment spans residues 1–141; sequence MSHSPNLSPQ…ARDYPNKIKY (141 aa). The segment at 38 to 109 is disordered; it reads HPIGHHGREQ…KPTSTSIKTN (72 aa). Composition is skewed to low complexity over residues 53–69 and 85–99; these read NTTKTTTTTTNKIHTTT and DLSSLESQQEQYLSQ. A helical membrane pass occupies residues 142–162; sequence LIVFIIAFASLAGPFGTSVML. Topologically, residues 163–180 are extracellular; sequence PAIDDIVNDLNTNVSTVN. N-linked (GlcNAc...) asparagine glycans are attached at residues N175 and N180. Residues 181–201 form a helical membrane-spanning segment; sequence VSVGIYLLSLGIFPLWWSSFS. The Cytoplasmic segment spans residues 202–215; sequence ERFGRRSVYMVSFT. The helical transmembrane segment at 216-236 threads the bilayer; it reads LFVAFSIGTALSPNIAALIVL. Topologically, residues 237 to 240 are extracellular; sequence RVLQ. A helical membrane pass occupies residues 241-261; sequence GGSSASVQAVGAGTIADLFIP. Residues 262 to 268 lie on the Cytoplasmic side of the membrane; sequence QERGQAM. The chain crosses the membrane as a helical span at residues 269 to 289; the sequence is GLYYLGPLAGPFLAPILGGAV. The Extracellular portion of the chain corresponds to 290–296; the sequence is SQAWGWR. A helical membrane pass occupies residues 297–317; that stretch reads ATQWLLMIISACSFVLITFFL. The Cytoplasmic portion of the chain corresponds to 318-485; that stretch reads PETLRRVDTI…SIILLKHPPV (168 aa). The tract at residues 338–367 is disordered; it reads DNNGSQNEKIHDDFAGADNSSVHDIDGNPI. A helical membrane pass occupies residues 486 to 506; it reads VLVISFSAISFAAIYFFNMAI. Over 507–519 the chain is Extracellular; sequence SYEYARSPYNFSS. N-linked (GlcNAc...) asparagine glycosylation occurs at N516. Residues 520 to 540 form a helical membrane-spanning segment; the sequence is VILGLMYIPNSVTYFMASIIG. Residues 541–565 are Cytoplasmic-facing; it reads GKWNDRLLNRYAQKHGELVPESRLS. The helical transmembrane segment at 566–586 threads the bilayer; sequence WNIVVAIILYPMACLIFGWTI. Residues 587–590 are Extracellular-facing; the sequence is KYRE. A helical transmembrane segment spans residues 591–611; that stretch reads FWVIPLIGTALFGFASMLVIG. The Cytoplasmic portion of the chain corresponds to 612–626; sequence ATVTYLVDSLPGKGA. The chain crosses the membrane as a helical span at residues 627–647; the sequence is TGVALNNLIRQILAAIATFIV. The Extracellular segment spans residues 648–653; that stretch reads EPLLRA. The helical transmembrane segment at 654–674 threads the bilayer; it reads IGAGVLFSIIAGILLVSSLVL. At 675–697 the chain is on the cytoplasmic side; sequence LYLKKRGAFFREHYDVMDLYAKL.

Belongs to the major facilitator superfamily. CAR1 family.

It is found in the cell membrane. Functionally, MFS antiporter that does not display functional linkage as drug transporter and performs functions that significantly affect biofilm development and virulence. No substrate for transport has been identified yet, but plays an important role in the growth in the host. In Candida albicans (strain SC5314 / ATCC MYA-2876) (Yeast), this protein is MFS antiporter QDR3 (QDR3).